A 20-amino-acid polypeptide reads, in one-letter code: Thylakoid lumenal 20 kDa protein (20 aa).

A disordered region spans residues 1–20; that stretch reads RDVDVGSFLPKSPSDPSMVL.

Its subcellular location is the plastid. It is found in the chloroplast thylakoid lumen. This Spinacia oleracea (Spinach) protein is Thylakoid lumenal 20 kDa protein.